Consider the following 189-residue polypeptide: Glucose-6-phosphate isomerase (189 aa).

Positions 88, 90, 97, and 136 each coordinate Fe cation.

The protein belongs to the archaeal-type GPI family. As to quaternary structure, homodimer. Requires Fe cation as cofactor.

It is found in the cytoplasm. The catalysed reaction is alpha-D-glucose 6-phosphate = beta-D-fructose 6-phosphate. It participates in carbohydrate degradation; glycolysis; D-glyceraldehyde 3-phosphate and glycerone phosphate from D-glucose: step 2/4. This Pyrococcus abyssi (strain GE5 / Orsay) protein is Glucose-6-phosphate isomerase (pgiA).